We begin with the raw amino-acid sequence, 151 residues long: MILRAVVQRVSRARVTVGGEVVGQIGPGYVVLLGVSREDDEAAADYLAEKVAGLRVFEDEEGKMNRSIQEAGGAVLAVSQFTLYGDVRRGRRPGFDRAARPEQAEPLYRRFVERLRALGLHVETGRFQTHMEVELVNDGPVTILIDSEKTF.

The Gly-cisPro motif, important for rejection of L-amino acids signature appears at 139 to 140; that stretch reads GP.

It belongs to the DTD family. Homodimer.

It localises to the cytoplasm. The catalysed reaction is glycyl-tRNA(Ala) + H2O = tRNA(Ala) + glycine + H(+). The enzyme catalyses a D-aminoacyl-tRNA + H2O = a tRNA + a D-alpha-amino acid + H(+). An aminoacyl-tRNA editing enzyme that deacylates mischarged D-aminoacyl-tRNAs. Also deacylates mischarged glycyl-tRNA(Ala), protecting cells against glycine mischarging by AlaRS. Acts via tRNA-based rather than protein-based catalysis; rejects L-amino acids rather than detecting D-amino acids in the active site. By recycling D-aminoacyl-tRNA to D-amino acids and free tRNA molecules, this enzyme counteracts the toxicity associated with the formation of D-aminoacyl-tRNA entities in vivo and helps enforce protein L-homochirality. The polypeptide is D-aminoacyl-tRNA deacylase (Symbiobacterium thermophilum (strain DSM 24528 / JCM 14929 / IAM 14863 / T)).